The primary structure comprises 88 residues: MLAFCYSLPNAGDVIKGRVYEKDYALYIYLFDYPHFEAILAESVKMHMDRYVEYRDKLVGKTVKVKVIRVDYTKGYIDVNYKRMCRHQ.

In terms of domain architecture, S1 motif spans 8–82 (LPNAGDVIKG…TKGYIDVNYK (75 aa)). 2 binding to host EIF2AK2/PKR regions span residues 43 to 53 (SVKMHMDRYVE) and 74 to 79 (KGYIDV).

It belongs to the poxviridae K3 protein family. Interacts with host EIF2AK2/PKR kinase.

Its function is as follows. Viral mimic of EIF2S1/eIF-2alpha that acts as a pseudosubstrate for EIF2AK2/PKR kinase. Inhibits therefore EIF2S1/eIF-2alpha phosphorylation by host EIF2AK2/PKR kinase and prevents protein synthesis shutoff. Determinant of host species specificity. This chain is Protein K3, found in Vaccinia virus (strain Western Reserve) (VACV).